The primary structure comprises 167 residues: Telethonin (167 aa).

Ser-39 carries the post-translational modification Phosphoserine. Residues 142–167 (PVVPVSKPGPLRRTLSRSMSQEAQRG) are disordered. The span at 157-167 (SRSMSQEAQRG) shows a compositional bias: polar residues.

Interacts with MYOZ1, MYOZ2 and MYOZ3. Interacts with CSRP3. Interacts directly with the N-terminal Ig-like domains of 2 titin (TTN) molecules. Interacts with ANKRD2; the interaction is direct.

The protein localises to the cytoplasm. The protein resides in the myofibril. It localises to the sarcomere. Functionally, muscle assembly regulating factor. Mediates the antiparallel assembly of titin (TTN) molecules at the sarcomeric Z-disk. This Mus musculus (Mouse) protein is Telethonin (Tcap).